The following is a 138-amino-acid chain: Nucleoside diphosphate kinase (138 aa).

ATP is bound by residues K12, Y60, R88, T94, R105, and N115. H118 acts as the Pros-phosphohistidine intermediate in catalysis.

This sequence belongs to the NDK family. Homotetramer. Mg(2+) serves as cofactor.

The protein localises to the cytoplasm. The enzyme catalyses a 2'-deoxyribonucleoside 5'-diphosphate + ATP = a 2'-deoxyribonucleoside 5'-triphosphate + ADP. It carries out the reaction a ribonucleoside 5'-diphosphate + ATP = a ribonucleoside 5'-triphosphate + ADP. Its function is as follows. Major role in the synthesis of nucleoside triphosphates other than ATP. The ATP gamma phosphate is transferred to the NDP beta phosphate via a ping-pong mechanism, using a phosphorylated active-site intermediate. The protein is Nucleoside diphosphate kinase of Cutibacterium acnes (strain DSM 16379 / KPA171202) (Propionibacterium acnes).